The chain runs to 509 residues: ATP synthase subunit alpha (509 aa).

169–176 (GDRQTGKT) serves as a coordination point for ATP.

Belongs to the ATPase alpha/beta chains family. F-type ATPases have 2 components, CF(1) - the catalytic core - and CF(0) - the membrane proton channel. CF(1) has five subunits: alpha(3), beta(3), gamma(1), delta(1), epsilon(1). CF(0) has three main subunits: a(1), b(2) and c(9-12). The alpha and beta chains form an alternating ring which encloses part of the gamma chain. CF(1) is attached to CF(0) by a central stalk formed by the gamma and epsilon chains, while a peripheral stalk is formed by the delta and b chains.

The protein resides in the cell inner membrane. The catalysed reaction is ATP + H2O + 4 H(+)(in) = ADP + phosphate + 5 H(+)(out). Its function is as follows. Produces ATP from ADP in the presence of a proton gradient across the membrane. The alpha chain is a regulatory subunit. The sequence is that of ATP synthase subunit alpha from Rhizobium meliloti (strain 1021) (Ensifer meliloti).